The following is a 218-amino-acid chain: MGRLLALVVGAALVSSACGGCVEVDSETEAVYGMTFKILCISCKRRSETNAETFTEWTFRQKGTEEFVKILRYENEVLQLEEDERFEGRVVWNGSRGTKDLQDLSIFITNVTYNHSGDYECHVYRLLFFENYEHNTSVVKKIHIEVVDKANRDMASIVSEIMMYVLIVVLTIWLVAEMIYCYKKIAAATETAAQENASEYLAITSESKENCTGVQVAE.

The signal sequence occupies residues 1–18 (MGRLLALVVGAALVSSAC). Residues 19–157 (GGCVEVDSET…DKANRDMASI (139 aa)) lie on the Extracellular side of the membrane. 2 disulfide bridges follow: C21/C43 and C40/C121. In terms of domain architecture, Ig-like C2-type spans 22-150 (VEVDSETEAV…KIHIEVVDKA (129 aa)). Residues N93, N110, N114, and N135 are each glycosylated (N-linked (GlcNAc...) asparagine). A helical transmembrane segment spans residues 158–179 (VSEIMMYVLIVVLTIWLVAEMI). The Cytoplasmic portion of the chain corresponds to 180-218 (YCYKKIAAATETAAQENASEYLAITSESKENCTGVQVAE).

The protein belongs to the sodium channel auxiliary subunit SCN1B (TC 8.A.17) family. In terms of assembly, voltage-gated sodium (Nav) channel consists of an ion-conducting pore-forming alpha subunit functional on its own that is regulated by one or more beta subunits. Interacts with SCN1A; regulatory subunit of SCN1A/Nav1.1. Interacts with SCN3A; regulatory subunit of SCN3A/Nav1.3. Interacts with SCN4A; regulatory subunit of SCN4A/Nav1.4. Interacts with SCN5A; regulatory subunit of SCN5A/Nav1.5. Interacts with SCN8A; regulatory subunit of SCN8A/Nav1.6. Interacts with SCN9A; regulatory subunit of SCN9A/Nav1.7. Interacts with SCN10A; regulatory subunit of SCN10A/Nav1.8. Interacts with NFASC. Interacts with TMEM65. In terms of tissue distribution, the overall expression of isoform 1 and isoform 2 is very similar. Isoform 1 is abundantly expressed in skeletal muscle, heart and brain. Isoform 2 is highly expressed in brain and skeletal muscle and present at a very low level in heart, placenta, lung, liver, kidney and pancreas. In brain, isoform 2 is most abundant in the cerebellum, followed by the cerebral cortex and occipital lobe, while isoform 1 levels are higher in the cortex compared to the cerebellum. Isoform 2 is expressed in many regions of the brain, including cerebellar Purkinje cells, cortex pyramidal neurons and many of the neuronal fibers throughout the brain (at protein level). Also detected in dorsal root ganglion, in fibers of the spinal nerve and in cortical neurons and their processes (at protein level).

The protein resides in the cell membrane. Its subcellular location is the perikaryon. The protein localises to the cell projection. It is found in the axon. It localises to the secreted. Regulatory subunit of multiple voltage-gated sodium (Nav) channels directly mediating the depolarization of excitable membranes. Navs, also called VGSCs (voltage-gated sodium channels) or VDSCs (voltage-dependent sodium channels), operate by switching between closed and open conformations depending on the voltage difference across the membrane. In the open conformation they allow Na(+) ions to selectively pass through the pore, along their electrochemical gradient. The influx of Na+ ions provokes membrane depolarization, initiating the propagation of electrical signals throughout cells and tissues. The accessory beta subunits participate in localization and functional modulation of the Nav channels. Modulates the activity of SCN1A/Nav1.1, SCN2A/Nav1.2, SCN3A/Nav1.3, SCN4A/Nav1.4, SCN5A/Nav1.5, SCN8A/Nav1.6, SCN9A/Nav1.7 and SCN10A/Nav1.8. Functionally, cell adhesion molecule that plays a critical role in neuronal migration and pathfinding during brain development. Stimulates neurite outgrowth. Has no regulatory function on the SCN2A sodium channel complex. The chain is Sodium channel regulatory subunit beta-1 from Homo sapiens (Human).